An 86-amino-acid chain; its full sequence is MDPVDPNIEPWNHPGSQPKTACNRCHCKKCCYHCQVCFITKGLGISYGRKKRRQRRRPSQGGQTHQDPIPKQPSSQPRGDPTGPKE.

The segment at 1 to 21 is disordered; sequence MDPVDPNIEPWNHPGSQPKTA. Positions 1–24 are interaction with human CREBBP; the sequence is MDPVDPNIEPWNHPGSQPKTACNR. The segment at 1–48 is transactivation; the sequence is MDPVDPNIEPWNHPGSQPKTACNRCHCKKCCYHCQVCFITKGLGISYG. 3 residues coordinate Zn(2+): Cys22, Cys25, and Cys27. The segment at 22–37 is cysteine-rich; that stretch reads CNRCHCKKCCYHCQVC. Residue Lys28 is modified to N6-acetyllysine; by host PCAF. The Zn(2+) site is built by Cys30, His33, Cys34, and Cys37. The core stretch occupies residues 38 to 48; it reads FITKGLGISYG. Residues 47–86 form a disordered region; that stretch reads YGRKKRRQRRRPSQGGQTHQDPIPKQPSSQPRGDPTGPKE. Residues 48 to 58 are compositionally biased toward basic residues; that stretch reads GRKKRRQRRRP. The Nuclear localization signal, RNA-binding (TAR), and protein transduction motif lies at 49 to 57; it reads RKKRRQRRR. The tract at residues 49–86 is interaction with the host capping enzyme RNGTT; it reads RKKRRQRRRPSQGGQTHQDPIPKQPSSQPRGDPTGPKE. Residues Lys50 and Lys51 each carry the N6-acetyllysine; by host EP300 and GCN5L2 modification. Arg52 and Arg53 each carry asymmetric dimethylarginine; by host PRMT6. Positions 60–77 are enriched in polar residues; that stretch reads QGGQTHQDPIPKQPSSQP. Residue Lys71 forms a Glycyl lysine isopeptide (Lys-Gly) (interchain with G-Cter in ubiquitin) linkage. The Cell attachment site signature appears at 78 to 80; it reads RGD.

It belongs to the lentiviruses Tat family. In terms of assembly, interacts with host CCNT1. Associates with the P-TEFb complex composed at least of Tat, P-TEFb (CDK9 and CCNT1), TAR RNA, RNA Pol II. Recruits the HATs CREBBP, TAF1/TFIID, EP300, PCAF and GCN5L2. Interacts with host KAT5/Tip60; this interaction targets the latter to degradation. Interacts with the host deacetylase SIRT1. Interacts with host capping enzyme RNGTT; this interaction stimulates RNGTT. Binds to host KDR, and to the host integrins ITGAV/ITGB3 and ITGA5/ITGB1. Interacts with host KPNB1/importin beta-1 without previous binding to KPNA1/importin alpha-1. Interacts with EIF2AK2. Interacts with host nucleosome assembly protein NAP1L1; this interaction may be required for the transport of Tat within the nucleus, since the two proteins interact at the nuclear rim. Interacts with host C1QBP/SF2P32; this interaction involves lysine-acetylated Tat. Interacts with the host chemokine receptors CCR2, CCR3 and CXCR4. Interacts with host DPP4/CD26; this interaction may trigger an anti-proliferative effect. Interacts with host LDLR. Interacts with the host extracellular matrix metalloproteinase MMP1. Interacts with host PRMT6; this interaction mediates Tat's methylation. Interacts with, and is ubiquitinated by MDM2/Hdm2. Interacts with host PSMC3 and HTATIP2. Interacts with STAB1; this interaction may overcome SATB1-mediated repression of IL2 and IL2RA (interleukin) in T cells by binding to the same domain than HDAC1. Interacts (when acetylated) with human CDK13, thereby increasing HIV-1 mRNA splicing and promoting the production of the doubly spliced HIV-1 protein Nef. Interacts with host TBP; this interaction modulates the activity of transcriptional pre-initiation complex. Interacts with host RELA. Interacts with host PLSCR1; this interaction negatively regulates Tat transactivation activity by altering its subcellular distribution. In terms of processing, asymmetrical arginine methylation by host PRMT6 seems to diminish the transactivation capacity of Tat and affects the interaction with host CCNT1. Acetylation by EP300, CREBBP, GCN5L2/GCN5 and PCAF regulates the transactivation activity of Tat. EP300-mediated acetylation of Lys-50 promotes dissociation of Tat from the TAR RNA through the competitive binding to PCAF's bromodomain. In addition, the non-acetylated Tat's N-terminus can also interact with PCAF. PCAF-mediated acetylation of Lys-28 enhances Tat's binding to CCNT1. Lys-50 is deacetylated by SIRT1. Post-translationally, polyubiquitination by host MDM2 does not target Tat to degradation, but activates its transactivation function and fosters interaction with CCNT1 and TAR RNA. In terms of processing, phosphorylated by EIF2AK2 on serine and threonine residues adjacent to the basic region important for TAR RNA binding and function. Phosphorylation of Tat by EIF2AK2 is dependent on the prior activation of EIF2AK2 by dsRNA.

It localises to the host nucleus. It is found in the host nucleolus. The protein localises to the host cytoplasm. Its subcellular location is the secreted. Transcriptional activator that increases RNA Pol II processivity, thereby increasing the level of full-length viral transcripts. Recognizes a hairpin structure at the 5'-LTR of the nascent viral mRNAs referred to as the transactivation responsive RNA element (TAR) and recruits the cyclin T1-CDK9 complex (P-TEFb complex) that will in turn hyperphosphorylate the RNA polymerase II to allow efficient elongation. The CDK9 component of P-TEFb and other Tat-activated kinases hyperphosphorylate the C-terminus of RNA Pol II that becomes stabilized and much more processive. Other factors such as HTATSF1/Tat-SF1, SUPT5H/SPT5, and HTATIP2 are also important for Tat's function. Besides its effect on RNA Pol II processivity, Tat induces chromatin remodeling of proviral genes by recruiting the histone acetyltransferases (HATs) CREBBP, EP300 and PCAF to the chromatin. This also contributes to the increase in proviral transcription rate, especially when the provirus integrates in transcriptionally silent region of the host genome. To ensure maximal activation of the LTR, Tat mediates nuclear translocation of NF-kappa-B by interacting with host RELA. Through its interaction with host TBP, Tat may also modulate transcription initiation. Tat can reactivate a latently infected cell by penetrating in it and transactivating its LTR promoter. In the cytoplasm, Tat is thought to act as a translational activator of HIV-1 mRNAs. Its function is as follows. Extracellular circulating Tat can be endocytosed by surrounding uninfected cells via the binding to several surface receptors such as CD26, CXCR4, heparan sulfate proteoglycans (HSPG) or LDLR. Neurons are rarely infected, but they internalize Tat via their LDLR. Through its interaction with nuclear HATs, Tat is potentially able to control the acetylation-dependent cellular gene expression. Modulates the expression of many cellular genes involved in cell survival, proliferation or in coding for cytokines or cytokine receptors. Tat plays a role in T-cell and neurons apoptosis. Tat induced neurotoxicity and apoptosis probably contribute to neuroAIDS. Circulating Tat also acts as a chemokine-like and/or growth factor-like molecule that binds to specific receptors on the surface of the cells, affecting many cellular pathways. In the vascular system, Tat binds to ITGAV/ITGB3 and ITGA5/ITGB1 integrins dimers at the surface of endothelial cells and competes with bFGF for heparin-binding sites, leading to an excess of soluble bFGF. The sequence is that of Protein Tat from Human immunodeficiency virus type 1 group M subtype D (isolate Z2/CDC-Z34) (HIV-1).